A 210-amino-acid chain; its full sequence is Large ribosomal subunit protein uL4 (210 aa).

Positions 44–77 (ARQGNASSKTRSEVRGGGRKPWRQKGTGRARAGS) are disordered. Residues 60–71 (GGRKPWRQKGTG) are compositionally biased toward basic residues.

It belongs to the universal ribosomal protein uL4 family. As to quaternary structure, part of the 50S ribosomal subunit.

One of the primary rRNA binding proteins, this protein initially binds near the 5'-end of the 23S rRNA. It is important during the early stages of 50S assembly. It makes multiple contacts with different domains of the 23S rRNA in the assembled 50S subunit and ribosome. Functionally, forms part of the polypeptide exit tunnel. This is Large ribosomal subunit protein uL4 from Microcystis aeruginosa (strain NIES-843 / IAM M-2473).